We begin with the raw amino-acid sequence, 466 residues long: ATP-dependent protease ATPase subunit HslU (466 aa).

ATP contacts are provided by residues Ile-18, 60 to 65 (GVGKTE), Asp-279, Glu-344, and Arg-416.

Belongs to the ClpX chaperone family. HslU subfamily. A double ring-shaped homohexamer of HslV is capped on each side by a ring-shaped HslU homohexamer. The assembly of the HslU/HslV complex is dependent on binding of ATP.

The protein localises to the cytoplasm. Its function is as follows. ATPase subunit of a proteasome-like degradation complex; this subunit has chaperone activity. The binding of ATP and its subsequent hydrolysis by HslU are essential for unfolding of protein substrates subsequently hydrolyzed by HslV. HslU recognizes the N-terminal part of its protein substrates and unfolds these before they are guided to HslV for hydrolysis. This chain is ATP-dependent protease ATPase subunit HslU, found in Syntrophomonas wolfei subsp. wolfei (strain DSM 2245B / Goettingen).